The primary structure comprises 293 residues: Phosphatidylserine decarboxylase proenzyme (293 aa).

Active-site charge relay system; for autoendoproteolytic cleavage activity residues include Asp90, His147, and Ser254. Ser254 functions as the Schiff-base intermediate with substrate; via pyruvic acid; for decarboxylase activity in the catalytic mechanism. Ser254 bears the Pyruvic acid (Ser); by autocatalysis mark.

The protein belongs to the phosphatidylserine decarboxylase family. PSD-B subfamily. Prokaryotic type I sub-subfamily. As to quaternary structure, heterodimer of a large membrane-associated beta subunit and a small pyruvoyl-containing alpha subunit. The cofactor is pyruvate. Is synthesized initially as an inactive proenzyme. Formation of the active enzyme involves a self-maturation process in which the active site pyruvoyl group is generated from an internal serine residue via an autocatalytic post-translational modification. Two non-identical subunits are generated from the proenzyme in this reaction, and the pyruvate is formed at the N-terminus of the alpha chain, which is derived from the carboxyl end of the proenzyme. The autoendoproteolytic cleavage occurs by a canonical serine protease mechanism, in which the side chain hydroxyl group of the serine supplies its oxygen atom to form the C-terminus of the beta chain, while the remainder of the serine residue undergoes an oxidative deamination to produce ammonia and the pyruvoyl prosthetic group on the alpha chain. During this reaction, the Ser that is part of the protease active site of the proenzyme becomes the pyruvoyl prosthetic group, which constitutes an essential element of the active site of the mature decarboxylase.

The protein resides in the cell membrane. It catalyses the reaction a 1,2-diacyl-sn-glycero-3-phospho-L-serine + H(+) = a 1,2-diacyl-sn-glycero-3-phosphoethanolamine + CO2. Its pathway is phospholipid metabolism; phosphatidylethanolamine biosynthesis; phosphatidylethanolamine from CDP-diacylglycerol: step 2/2. In terms of biological role, catalyzes the formation of phosphatidylethanolamine (PtdEtn) from phosphatidylserine (PtdSer). The protein is Phosphatidylserine decarboxylase proenzyme of Yersinia enterocolitica serotype O:8 / biotype 1B (strain NCTC 13174 / 8081).